The following is a 596-amino-acid chain: Arrestin domain-containing protein C31A2.12 (596 aa).

A helical membrane pass occupies residues 194-211 (AYAIGSYIPIHFVLVPLL). 2 disordered regions span residues 363–387 (NLDTPLPSGATTPRRRDSMEPTYAS) and 405–446 (QQQP…VITR). Residues T373 and T374 each carry the phosphothreonine modification. Polar residues-rich tracts occupy residues 405–420 (QQQPQGRSPNEHSPSN) and 430–446 (SLGSNPSSGAASAVITR). Phosphoserine is present on residues S452, S474, S493, and S497. The tract at residues 493 to 596 (SRPPSPGIVT…MLPSGFSRRN (104 aa)) is disordered. A phosphothreonine mark is found at T502 and T507. Over residues 504-522 (PQRTSPSFFVSPTESTRQS) the composition is skewed to polar residues. A Phosphoserine modification is found at S514. Over residues 531–555 (HSTSSSSGISPSHSSASLAHLSQAS) the composition is skewed to low complexity.

The protein belongs to the arrestin family.

The protein resides in the membrane. The chain is Arrestin domain-containing protein C31A2.12 from Schizosaccharomyces pombe (strain 972 / ATCC 24843) (Fission yeast).